We begin with the raw amino-acid sequence, 736 residues long: Probable methionine--tRNA ligase, cytoplasmic (736 aa).

The 'HIGH' region signature appears at 25–35 (PYVNNVPHLGN). The 'KMSKS' region motif lies at 346 to 350 (KFSKS). Lys-349 lines the ATP pocket. The region spanning 573 to 680 (PEFPIDMKIA…QSIEAGSKIA (108 aa)) is the tRNA-binding domain.

Belongs to the class-I aminoacyl-tRNA synthetase family.

It localises to the cytoplasm. The catalysed reaction is tRNA(Met) + L-methionine + ATP = L-methionyl-tRNA(Met) + AMP + diphosphate. The protein is Probable methionine--tRNA ligase, cytoplasmic (metS) of Dictyostelium discoideum (Social amoeba).